The following is a 619-amino-acid chain: UvrABC system protein C (619 aa).

In terms of domain architecture, GIY-YIG spans 20–98; it reads TAPGVYRMYA…IKSLSPRYNV (79 aa). The 36-residue stretch at 207 to 242 folds into the UVR domain; sequence DQLGEEIMHSMQQASEALEFERAARLRDLLSSLRSM.

This sequence belongs to the UvrC family. As to quaternary structure, interacts with UvrB in an incision complex.

It localises to the cytoplasm. Its function is as follows. The UvrABC repair system catalyzes the recognition and processing of DNA lesions. UvrC both incises the 5' and 3' sides of the lesion. The N-terminal half is responsible for the 3' incision and the C-terminal half is responsible for the 5' incision. The chain is UvrABC system protein C from Xanthomonas axonopodis pv. citri (strain 306).